The primary structure comprises 495 residues: Acyltransferase abl6 (495 aa).

His-171 acts as the Proton acceptor in catalysis.

The protein belongs to the plant acyltransferase family.

Functionally, acyltransferase; part of the gene cluster that mediates the biosynthesis of abscisic acid (ABA), a phytohormone that acts antagonistically toward salicylic acid (SA), jasmonic acid (JA) and ethylene (ETH) signaling, to impede plant defense responses. The first step of the pathway catalyzes the reaction from farnesyl diphosphate to alpha-ionylideneethane performed by the alpha-ionylideneethane synthase abl3 via a three-step reaction mechanism involving 2 neutral intermediates, beta-farnesene and allofarnesene. The cytochrome P450 monooxygenase abl1 might then be involved in the conversion of alpha-ionylideneethane to alpha-ionylideneacetic acid. Alpha-ionylideneacetic acid is further converted to abscisic acid in 2 steps involving the cytochrome P450 monooxygenase abl2 and the short-chain dehydrogenase/reductase abl4, via the intermediates 1'-deoxy-ABA or 1',4'-trans-diol-ABA, depending on the order of action of these 2 enzymes. Abl2 is responsible for the hydroxylation of carbon atom C-1' and abl4 might be involved in the oxidation of the C-4' carbon atom. The acyltransferase abl6 seems not essential for the biosynthesis of ABA, but it may acetylate ABA as part of the synthesis of another ABA-related molecule. This Leptosphaeria maculans (strain JN3 / isolate v23.1.3 / race Av1-4-5-6-7-8) (Blackleg fungus) protein is Acyltransferase abl6.